The primary structure comprises 151 residues: Macrodomain Ter protein (151 aa).

It belongs to the MatP family. As to quaternary structure, homodimer.

It is found in the cytoplasm. In terms of biological role, required for spatial organization of the terminus region of the chromosome (Ter macrodomain) during the cell cycle. Prevents early segregation of duplicated Ter macrodomains during cell division. Binds specifically to matS, which is a 13 bp signature motif repeated within the Ter macrodomain. The chain is Macrodomain Ter protein from Photorhabdus laumondii subsp. laumondii (strain DSM 15139 / CIP 105565 / TT01) (Photorhabdus luminescens subsp. laumondii).